Reading from the N-terminus, the 138-residue chain is Vesicle transport protein GOT1B (138 aa).

Methionine 1 is modified (N-acetylmethionine). At 1 to 9 (MISLTDTQK) the chain is on the cytoplasmic side. The chain crosses the membrane as a helical span at residues 10-30 (IGMGLTGFGVFFLFFGMILFF). Residues 31–32 (DK) are Lumenal-facing. A helical membrane pass occupies residues 33 to 53 (ALLAIGNVLFVAGLAFVIGLE). The Cytoplasmic portion of the chain corresponds to 54-68 (RTFRFFFQKHKMKAT). A helical membrane pass occupies residues 69-89 (GFFLGGVFVVLIGWPLIGMIF). Residue glutamate 90 is a topological domain, lumenal. A helical membrane pass occupies residues 91–109 (IYGFFLLFRGFFPVVVGFI). Residues 110–138 (RRVPVLGSLLNLPGIRSFVDKVGESNNMV) lie on the Cytoplasmic side of the membrane.

The protein belongs to the GOT1 family.

It localises to the golgi apparatus membrane. Its function is as follows. May be involved in fusion of ER-derived transport vesicles with the Golgi complex. The polypeptide is Vesicle transport protein GOT1B (Bos taurus (Bovine)).